The chain runs to 260 residues: Chlorocatechol 1,2-dioxygenase (260 aa).

Fe cation-binding residues include Tyr130, Tyr164, His188, and His190.

Belongs to the intradiol ring-cleavage dioxygenase family. It depends on Fe(3+) as a cofactor.

The enzyme catalyses 3-chlorocatechol + O2 = (2E,4Z)-2-chloromuconate + 2 H(+). It carries out the reaction 3,5-dichlorocatechol + O2 = (2E,4E)-2,4-dichloromuconate + 2 H(+). The protein operates within aromatic compound metabolism; 3-chlorocatechol degradation. Its function is as follows. Preferentially converts 3-chlorocatechol and 3,5-dichlorocatechol as opposed to other chlorinated catechols. Retains diminished activity toward non-chlorinated substrates. This chain is Chlorocatechol 1,2-dioxygenase (clcA), found in Pseudomonas putida (Arthrobacter siderocapsulatus).